Consider the following 64-residue polypeptide: Small ribosomal subunit protein eS17 (64 aa).

This sequence belongs to the eukaryotic ribosomal protein eS17 family.

This chain is Small ribosomal subunit protein eS17, found in Methanococcoides burtonii (strain DSM 6242 / NBRC 107633 / OCM 468 / ACE-M).